The primary structure comprises 578 residues: Arginine--tRNA ligase (578 aa).

The 'HIGH' region signature appears at 125 to 135; sequence PNVAKKMHVGH.

Belongs to the class-I aminoacyl-tRNA synthetase family. In terms of assembly, monomer.

Its subcellular location is the cytoplasm. It catalyses the reaction tRNA(Arg) + L-arginine + ATP = L-arginyl-tRNA(Arg) + AMP + diphosphate. The chain is Arginine--tRNA ligase from Buchnera aphidicola subsp. Baizongia pistaciae (strain Bp).